The chain runs to 202 residues: uncharacterized protein (202 aa).

It belongs to the NAD(P)H dehydrogenase (quinone) family.

This is an uncharacterized protein from Haemophilus influenzae (strain ATCC 51907 / DSM 11121 / KW20 / Rd).